The primary structure comprises 194 residues: MAAAAPNAGGSAPETAGSAEAPLQYSLLLQYLVGDKRQPRLLEPGSLGGIPSPAKSEEQKMIEKAMESCAFKAALACVGGFVLGGAFGVFTAGIDTNVGFDPKDPYRTPTAKEVLKDMGQRGMSYAKNFAIVGAMFSCTECLIESYRGTSDWKNSVISGCITGGAIGFRAGLKAGAIGCGGFAAFSAAIDYYLR.

Cystine bridges form between C69–C141 and C160–C179. 3 consecutive transmembrane segments (helical) span residues 74-94 (ALAC…TAGI), 123-143 (MSYA…ECLI), and 170-190 (AGLK…AAID).

The protein belongs to the Tim17/Tim22/Tim23 family. In terms of assembly, component of the TIM22 complex, whose core is composed of TIMM22, associated with peripheral protein FXC1/TIMM10B and the 70 kDa heterohexamer. In most cases, the 70 kDa complex is composed of TIMM9 and TIMM10 (TIMM10A or TIMM10B). A small fraction of the 70 kDa complex is composed of TIMM8 (TIMM8A/DDP1 or TIMM8B/DDP2) and TIMM13. The TIM22 complex also contains AGK and TIMM29. Interacts directly with TIMM9, TIMM10A and FXC1/TIMM10B. Interacts (when oxidized) with TIMM29; interaction is direct. Disulfide bonds promote efficient assembly of the TIM22 complex.

It localises to the mitochondrion inner membrane. Functionally, essential core component of the TIM22 complex, a complex that mediates the import and insertion of multi-pass transmembrane proteins into the mitochondrial inner membrane. In the TIM22 complex, it constitutes the voltage-activated and signal-gated channel. Forms a twin-pore translocase that uses the membrane potential as external driving force in 2 voltage-dependent steps. This is Mitochondrial import inner membrane translocase subunit Tim22 (TIMM22) from Homo sapiens (Human).